The following is a 295-amino-acid chain: Pyridoxal 5'-phosphate synthase subunit PdxS (295 aa).

Aspartate 25 contributes to the D-ribose 5-phosphate binding site. Lysine 82 functions as the Schiff-base intermediate with D-ribose 5-phosphate in the catalytic mechanism. Glycine 154 serves as a coordination point for D-ribose 5-phosphate. Arginine 166 contacts D-glyceraldehyde 3-phosphate. Residues glycine 215 and 236-237 contribute to the D-ribose 5-phosphate site; that span reads GS.

Belongs to the PdxS/SNZ family. In the presence of PdxT, forms a dodecamer of heterodimers.

The catalysed reaction is aldehydo-D-ribose 5-phosphate + D-glyceraldehyde 3-phosphate + L-glutamine = pyridoxal 5'-phosphate + L-glutamate + phosphate + 3 H2O + H(+). Its pathway is cofactor biosynthesis; pyridoxal 5'-phosphate biosynthesis. In terms of biological role, catalyzes the formation of pyridoxal 5'-phosphate from ribose 5-phosphate (RBP), glyceraldehyde 3-phosphate (G3P) and ammonia. The ammonia is provided by the PdxT subunit. Can also use ribulose 5-phosphate and dihydroxyacetone phosphate as substrates, resulting from enzyme-catalyzed isomerization of RBP and G3P, respectively. This chain is Pyridoxal 5'-phosphate synthase subunit PdxS, found in Bacillus cereus (strain G9842).